The following is an 86-amino-acid chain: Anti-adapter protein IraP (86 aa).

A coiled-coil region spans residues 1–36 (MKNLIAELLLKLAQKEEESKELCAQVEALEIIVTAM).

This sequence belongs to the IraP family. As to quaternary structure, interacts with RssB.

The protein localises to the cytoplasm. Inhibits RpoS proteolysis by regulating RssB activity, thereby increasing the stability of the sigma stress factor RpoS especially during phosphate starvation, but also in stationary phase and during nitrogen starvation. Its effect on RpoS stability is due to its interaction with RssB, which probably blocks the interaction of RssB with RpoS, and the consequent delivery of the RssB-RpoS complex to the ClpXP protein degradation pathway. The chain is Anti-adapter protein IraP from Shigella boydii serotype 18 (strain CDC 3083-94 / BS512).